Reading from the N-terminus, the 303-residue chain is HTH-type transcriptional regulator LinR (303 aa).

The 58-residue stretch at 6 to 63 (LDFRHLVLLDALLKRHSVSAAARELDLPQPTASHGLARLRKALGDPLLVRARDGMEPT) folds into the HTH lysR-type domain. The segment at residues 23–42 (VSAAARELDLPQPTASHGLA) is a DNA-binding region (H-T-H motif).

This sequence belongs to the LysR transcriptional regulatory family.

Its function is as follows. Positively regulates the transcription of the linD and linE genes that are involved in gamma-hexachlorocyclohexane (gamma-HCH or lindane) degradation. This degradation pathway allows S.japonicum UT26 to grow on gamma-HCH as the sole source of carbon and energy. The polypeptide is HTH-type transcriptional regulator LinR (linR) (Sphingobium indicum (strain DSM 16413 / CCM 7287 / MTCC 6362 / UT26 / NBRC 101211 / UT26S) (Sphingobium japonicum)).